A 634-amino-acid chain; its full sequence is Ras and EF-hand domain-containing protein homolog (634 aa).

EF-hand domains lie at 5–33 (EVEN…CPQL) and 33–68 (LDDN…TVQH). Ca(2+) contacts are provided by Asp46, Asp48, Ser50, Lys52, and Glu57. Positions 169-310 (LSEKKHENER…RCEFDQKQDE (142 aa)) form a coiled coil. A disordered region spans residues 212–234 (ARQEERDRLTKEKEEMRQRMSDE). GTP contacts are provided by residues 449–454 (AVGKSS), 552–555 (NKVD), and 585–586 (AL). Residues 632-634 (RGS) constitute a propeptide, removed in mature form.

This sequence belongs to the small GTPase superfamily. Rab family. In terms of assembly, homodimer.

The protein localises to the cytoplasm. The protein resides in the perinuclear region. Its function is as follows. Binds GTP and GDP. Plays a role in uterine seam cell development. This Caenorhabditis elegans protein is Ras and EF-hand domain-containing protein homolog.